Reading from the N-terminus, the 377-residue chain is Membrane protein MLC1 (377 aa).

Basic and acidic residues predominate over residues 1-23 (MTQEPFREELAYDRMPTLERGRQ). Positions 1–36 (MTQEPFREELAYDRMPTLERGRQDPASYAPDAKPSD) are disordered. 4 helical membrane-spanning segments follow: residues 52–72 (WVFS…SLYL), 82–100 (YLRC…SFTV), 111–131 (FQIL…WFGC), and 144–164 (FNLI…IIAA). Residues serine 177 and serine 179 each carry the phosphoserine modification. Transmembrane regions (helical) follow at residues 199–219 (SVVE…ALNV), 230–250 (VTFF…HVAA), 257–277 (LVEV…TASG), and 304–324 (LLLL…GTAI).

In terms of assembly, interacts with ATP1B1. Part of a complex containing ATP1B1, TRPV4, AQP4 and HEPACAM. In terms of tissue distribution, expressed in the brain, with highest levels found in the amygdala, nucleus caudatus, thalamus and hippocampus.

It localises to the membrane. The protein resides in the cell membrane. The protein localises to the cytoplasm. Its subcellular location is the perinuclear region. It is found in the endoplasmic reticulum. In terms of biological role, transmembrane protein mainly expressed in brain astrocytes that may play a role in transport across the blood-brain and brain-cerebrospinal fluid barriers. Regulates the response of astrocytes to hypo-osmosis by promoting calcium influx. May function as regulatory protein of membrane protein complexes such as ion channels. This chain is Membrane protein MLC1, found in Homo sapiens (Human).